We begin with the raw amino-acid sequence, 238 residues long: D-aminoacyl-tRNA deacylase (238 aa).

The protein belongs to the DtdA deacylase family. Monomer. It depends on Zn(2+) as a cofactor.

It carries out the reaction a D-aminoacyl-tRNA + H2O = a tRNA + a D-alpha-amino acid + H(+). It catalyses the reaction glycyl-tRNA(Ala) + H2O = tRNA(Ala) + glycine + H(+). The catalysed reaction is D-tyrosyl-tRNA(Tyr) + H2O = D-tyrosine + tRNA(Tyr). In terms of biological role, D-aminoacyl-tRNA deacylase with broad substrate specificity. By recycling D-aminoacyl-tRNA to D-amino acids and free tRNA molecules, this enzyme counteracts the toxicity associated with the formation of D-aminoacyl-tRNA entities in vivo. Catalyzes the hydrolysis of D-tyrosyl-tRNA(Tyr). The polypeptide is D-aminoacyl-tRNA deacylase (Saccharolobus solfataricus (strain ATCC 35092 / DSM 1617 / JCM 11322 / P2) (Sulfolobus solfataricus)).